Consider the following 347-residue polypeptide: Photosystem II assembly protein Ycf48 (347 aa).

A signal peptide spans Met-1–Ala-38. The short motif at Arg-202 to Arg-226 is the Arg-rich patch element.

This sequence belongs to the Ycf48 family. As to quaternary structure, interacts with the D1 protein (crystallized with PsbA1 or PsbA3), via the latter's C-terminal prepropeptide, may interact with parts of the mature D1 protein as well.

It localises to the cellular thylakoid lumen. Its function is as follows. A factor required for optimal assembly of photosystem II (PSII), acting in the early stages of PSII assembly. Also plays a role in replacement of photodamaged D1 (psbA). Assists YidC in synthesis of chlorophyll-binding proteins. The protein is Photosystem II assembly protein Ycf48 of Thermosynechococcus vestitus (strain NIES-2133 / IAM M-273 / BP-1).